The sequence spans 189 residues: uncharacterized protein (189 aa).

The signal sequence occupies residues 1–23 (MVPPKPALWALLLALLGTAPSRA). Asn-72 carries an N-linked (GlcNAc...) asparagine glycan.

This is an uncharacterized protein from Homo sapiens (Human).